We begin with the raw amino-acid sequence, 868 residues long: Protein translocase subunit SecA (868 aa).

ATP-binding positions include Gln-85, 103–107 (GEGKT), and Asp-508.

This sequence belongs to the SecA family. Monomer and homodimer. Part of the essential Sec protein translocation apparatus which comprises SecA, SecYEG and auxiliary proteins SecDF. Other proteins may also be involved.

It localises to the cell membrane. The protein localises to the cytoplasm. It catalyses the reaction ATP + H2O + cellular proteinSide 1 = ADP + phosphate + cellular proteinSide 2.. Functionally, part of the Sec protein translocase complex. Interacts with the SecYEG preprotein conducting channel. Has a central role in coupling the hydrolysis of ATP to the transfer of proteins into and across the cell membrane, serving as an ATP-driven molecular motor driving the stepwise translocation of polypeptide chains across the membrane. The sequence is that of Protein translocase subunit SecA from Deinococcus radiodurans (strain ATCC 13939 / DSM 20539 / JCM 16871 / CCUG 27074 / LMG 4051 / NBRC 15346 / NCIMB 9279 / VKM B-1422 / R1).